The primary structure comprises 89 residues: RNA-binding protein Hfq (89 aa).

Residues 9–68 form the Sm domain; it reads EPFLNALRKEKVPVSIYLVNGIKLQGQIESFDQFVILLRNNVNQMVYKHAISTVVPARNV. Positions 70–89 are disordered; it reads TAPPVPTETHAQSSEEFGNI. Residues 78-89 are compositionally biased toward polar residues; that stretch reads THAQSSEEFGNI.

Belongs to the Hfq family. In terms of assembly, homohexamer.

Functionally, RNA chaperone that binds small regulatory RNA (sRNAs) and mRNAs to facilitate mRNA translational regulation in response to envelope stress, environmental stress and changes in metabolite concentrations. Also binds with high specificity to tRNAs. This Alkalilimnicola ehrlichii (strain ATCC BAA-1101 / DSM 17681 / MLHE-1) protein is RNA-binding protein Hfq.